The primary structure comprises 225 residues: Uracil-DNA glycosylase (225 aa).

D65 serves as the catalytic Proton acceptor.

This sequence belongs to the uracil-DNA glycosylase (UDG) superfamily. UNG family.

Its subcellular location is the cytoplasm. The enzyme catalyses Hydrolyzes single-stranded DNA or mismatched double-stranded DNA and polynucleotides, releasing free uracil.. Functionally, excises uracil residues from the DNA which can arise as a result of misincorporation of dUMP residues by DNA polymerase or due to deamination of cytosine. This chain is Uracil-DNA glycosylase, found in Bacillus cereus (strain AH820).